We begin with the raw amino-acid sequence, 436 residues long: Arginine-hydroxylase NDUFAF5, mitochondrial (436 aa).

Residues 1-25 (MLRTTFRKGFNLKCFSKDWNQTRQY) constitute a mitochondrion transit peptide. The segment at 365 to 436 (VTLSQQQQQQ…DEINKNKDDK (72 aa)) is disordered. Residues 369–380 (QQQQQQGIEPQQ) are compositionally biased toward low complexity. 2 stretches are compositionally biased toward basic and acidic residues: residues 391–411 (PKTD…HFEK) and 421–436 (QNKE…KDDK).

It belongs to the methyltransferase superfamily.

Its subcellular location is the mitochondrion. In terms of biological role, involved in the assembly of mitochondrial NADH:ubiquinone oxidoreductase complex (complex I, MT-ND1) at early stages. Probably acts as an arginine hydroxylase. May also have methyltransferase activity. This Dictyostelium discoideum (Social amoeba) protein is Arginine-hydroxylase NDUFAF5, mitochondrial.